The sequence spans 178 residues: Cytidylate kinase (178 aa).

An ATP-binding site is contributed by 7-15 (GLPGTGTTT).

This sequence belongs to the cytidylate kinase family. Type 2 subfamily.

The protein resides in the cytoplasm. The catalysed reaction is CMP + ATP = CDP + ADP. It carries out the reaction dCMP + ATP = dCDP + ADP. This Methanococcus maripaludis (strain C7 / ATCC BAA-1331) protein is Cytidylate kinase.